Consider the following 67-residue polypeptide: Large ribosomal subunit protein bL32 (67 aa).

Over residues 1–20 (MAVPKRKMSRSNTRARRAKW) the composition is skewed to basic residues. A disordered region spans residues 1-24 (MAVPKRKMSRSNTRARRAKWKATA).

The protein belongs to the bacterial ribosomal protein bL32 family.

The protein is Large ribosomal subunit protein bL32 of Renibacterium salmoninarum (strain ATCC 33209 / DSM 20767 / JCM 11484 / NBRC 15589 / NCIMB 2235).